The following is a 387-amino-acid chain: MRMLIFTYKLERYIKNKILPKILVVPDRDKYQIKGSFRRRIPYITDIDIVNNVHPEYDDTNIYQRIVDLINSFTNDNQIKLIYVICGTDDRFLLTEYSDEEIEKIKILLNPTELVELNNVLSKYQDDLNKKVFYINEIIWDLYKLRWTSSEVLAGKKILRGGIEVSFQDVVKNNSILLLQYFVKIEYYPIGFDIAVRYKPINLITAYQNAAFYQLKLANYSKEYYFMLFPLRFYFKNDPTISKQLEYIIETKFGLYKQLLVRIDSYRTIYESGNLDLDTAKSIIISIIKDIRKLNGIDMNIIDKIQEVSNNSAGQDKIIAWNTLLTQLYTNINKSVNKQSKKYFTRYINIIPKEDRKLCCLEEEHVLQSGGINFESTNFLTKKKLIY.

It is found in the virion. This is an uncharacterized protein from Acanthamoeba polyphaga (Amoeba).